Consider the following 1809-residue polypeptide: Pyochelin synthetase PchF (1809 aa).

The condensation/cyclization stretch occupies residues 69-490; that stretch reads FPLTPVQAAY…GLLRRLAQSP (422 aa). Residues 520–915 form an adenylation region; it reads FAERALLTPD…GREDDQVKIR (396 aa). Residues 1407–1488 form the Carrier domain; that stretch reads APADELENAL…GLAERLRSAP (82 aa). Ser-1442 is subject to O-(pantetheine 4'-phosphoryl)serine. Residues 1584 to 1797 form a thioesterase region; sequence LGRRYAEALH…FDCLGEALAQ (214 aa).

Belongs to the NRP synthetase family. Pantetheine 4'-phosphate is required as a cofactor.

The enzyme catalyses holo-[peptidyl-carrier protein] + L-cysteine + ATP = L-cysteinyl-[peptidyl-carrier protein] + AMP + diphosphate. Its pathway is siderophore biosynthesis. Functionally, involved in the biosynthesis of the siderophore pyochelin. Adenylates L-cysteine and loads it onto its peptidyl carrier domain via a thioester linkage to the phosphopanthetheine moiety. Then forms a peptide bond between the salicyl-thiazolinyl intermediate bound to the second carrier domain of PchE and the cysteine bound to its own peptidyl carrier domain to form the salicyl-thiazolinyl-cysteinyl-S-PCP2 intermediate. It subsequently cyclizes the C-terminal cysteine to form the second thiazoline heterocycle in the salicyl-thiazolinyl-thiazolinyl-S-PCP2 intermediate. When this intermediate is released by the action of a thioesterase, it produces the tricyclic acid hydroxyphenyl-thiazolyl-thiazolinyl-carboxylic acid (HPTT-COOH), an advanced intermediate containing the aryl-4,2-bis-heterocyclic skeleton of the bithiazoline class of siderophores. The polypeptide is Pyochelin synthetase PchF (Pseudomonas aeruginosa (strain ATCC 15692 / DSM 22644 / CIP 104116 / JCM 14847 / LMG 12228 / 1C / PRS 101 / PAO1)).